Reading from the N-terminus, the 274-residue chain is Dermonecrotic toxin SdSicTox-betaIIB1bi (274 aa).

His-5 is an active-site residue. Mg(2+) contacts are provided by Glu-25 and Asp-27. His-41 serves as the catalytic Nucleophile. Cystine bridges form between Cys-45–Cys-51 and Cys-47–Cys-190. Position 85 (Asp-85) interacts with Mg(2+).

Belongs to the arthropod phospholipase D family. Class II subfamily. The cofactor is Mg(2+). As to expression, expressed by the venom gland.

The protein localises to the secreted. The enzyme catalyses an N-(acyl)-sphingosylphosphocholine = an N-(acyl)-sphingosyl-1,3-cyclic phosphate + choline. The catalysed reaction is an N-(acyl)-sphingosylphosphoethanolamine = an N-(acyl)-sphingosyl-1,3-cyclic phosphate + ethanolamine. It carries out the reaction a 1-acyl-sn-glycero-3-phosphocholine = a 1-acyl-sn-glycero-2,3-cyclic phosphate + choline. It catalyses the reaction a 1-acyl-sn-glycero-3-phosphoethanolamine = a 1-acyl-sn-glycero-2,3-cyclic phosphate + ethanolamine. Dermonecrotic toxins cleave the phosphodiester linkage between the phosphate and headgroup of certain phospholipids (sphingolipid and lysolipid substrates), forming an alcohol (often choline) and a cyclic phosphate. This toxin acts on sphingomyelin (SM). It may also act on ceramide phosphoethanolamine (CPE), lysophosphatidylcholine (LPC) and lysophosphatidylethanolamine (LPE), but not on lysophosphatidylserine (LPS), and lysophosphatidylglycerol (LPG). It acts by transphosphatidylation, releasing exclusively cyclic phosphate products as second products. Induces dermonecrosis, hemolysis, increased vascular permeability, edema, inflammatory response, and platelet aggregation. This chain is Dermonecrotic toxin SdSicTox-betaIIB1bi, found in Sicarius cf. damarensis (strain GJB-2008) (Six-eyed sand spider).